The primary structure comprises 158 residues: MARGNDIERVVADNRKARHDYFIEETYEAGIALTGSEIKSIRAGQVNLRGGYVRIVDGEAWLYDVHIAPYEQSGAYFNHEPTRPRKLLLHRREISRIAGQVERQGYTLVPLRLYLRGRRAKVEIGLARGKKLYDKRDDIARREARRDIERALKERTRR.

This sequence belongs to the SmpB family.

The protein resides in the cytoplasm. In terms of biological role, required for rescue of stalled ribosomes mediated by trans-translation. Binds to transfer-messenger RNA (tmRNA), required for stable association of tmRNA with ribosomes. tmRNA and SmpB together mimic tRNA shape, replacing the anticodon stem-loop with SmpB. tmRNA is encoded by the ssrA gene; the 2 termini fold to resemble tRNA(Ala) and it encodes a 'tag peptide', a short internal open reading frame. During trans-translation Ala-aminoacylated tmRNA acts like a tRNA, entering the A-site of stalled ribosomes, displacing the stalled mRNA. The ribosome then switches to translate the ORF on the tmRNA; the nascent peptide is terminated with the 'tag peptide' encoded by the tmRNA and targeted for degradation. The ribosome is freed to recommence translation, which seems to be the essential function of trans-translation. The chain is SsrA-binding protein from Roseiflexus sp. (strain RS-1).